We begin with the raw amino-acid sequence, 544 residues long: Methionine--tRNA ligase (544 aa).

The short motif at 10-20 (PYANGSLHLGH) is the 'HIGH' region element. C141, C144, C153, and C156 together coordinate Zn(2+). A 'KMSKS' region motif is present at residues 329-333 (KLSTS). T332 is a binding site for ATP.

It belongs to the class-I aminoacyl-tRNA synthetase family. MetG type 1 subfamily. Monomer. Zn(2+) serves as cofactor.

The protein resides in the cytoplasm. The enzyme catalyses tRNA(Met) + L-methionine + ATP = L-methionyl-tRNA(Met) + AMP + diphosphate. Its function is as follows. Is required not only for elongation of protein synthesis but also for the initiation of all mRNA translation through initiator tRNA(fMet) aminoacylation. The chain is Methionine--tRNA ligase from Bacillus cereus (strain AH187).